The following is a 227-amino-acid chain: Glial cell line-derived neurotrophic factor (227 aa).

The signal sequence occupies residues 1-19 (MKLWAILAVCILLLSSVSS). Residues 20–93 (IPLPSNWLAG…EFIQDTIKRL (74 aa)) constitute a propeptide that is removed on maturation. 2 disordered regions span residues 32–61 (RSHLPDPQEGEDQVFGMDGAVPEDPTANMA) and 93–113 (LKRSSNKQPPSRRDRGRQSLA). 3 cysteine pairs are disulfide-bonded: C134–C195, C161–C224, and C165–C226. Residues N142 and N178 are each glycosylated (N-linked (GlcNAc...) asparagine).

The protein belongs to the TGF-beta family. GDNF subfamily. As to quaternary structure, homodimer; disulfide-linked. Interacts with GFRA1 coreceptor and RET: forms a 2:2:2 ternary complex composed of GDNF ligand, GFRA1 and RET receptor. As to expression, from stage 22, expressed in somites and the pronephros. At stage 24 and 26, expressed in the pharyngeal arches I-III. At stage 31, expression in the eye, central nervous system and pharyngeal arches IV and V increases. Up to stage 34, expression becomes intense at the oral cavity and lateral line structures. At this stage, expression weakens in the pharyngeal arches, and increases in the epibranchial arches. Expressed in the digestive tract in stage 34 embryos.

Its subcellular location is the secreted. In terms of biological role, neurotrophic factor that enhances survival and morphological differentiation of dopaminergic neurons and increases their high-affinity dopamine uptake. Acts by binding to its coreceptor, GFRA1, leading to autophosphorylation and activation of the RET receptor. This Xenopus laevis (African clawed frog) protein is Glial cell line-derived neurotrophic factor.